A 204-amino-acid chain; its full sequence is Prephenate decarboxylase (204 aa).

Belongs to the prephenate decarboxylase family.

The protein localises to the cytoplasm. It catalyses the reaction prephenate + H(+) = 3-[(4R)-4-hydroxycyclohexa-1,5-dien-1-yl]-2-oxopropanoate + CO2. It participates in antibiotic biosynthesis; bacilysin biosynthesis. Its function is as follows. Part of the bacABCDEF operon responsible for the biosynthesis of the nonribosomally synthesized dipeptide antibiotic bacilysin, composed of L-alanine and L-anticapsin. Bacilysin is an irreversible inactivator of the glutaminase domain of glucosamine synthetase. BacA is an unusual prephenate decarboxylase that avoids the typical aromatization of the cyclohexadienol ring of prephenate. BacA catalyzes the protonation of prephenate (1-carboxy-4-hydroxy-alpha-oxo-2,5-cyclohexadiene-1-propanoic acid) at C6 position, followed by a decarboxylation to produce the endocyclic-delta(4),delta(8)-7R-dihydro-hydroxyphenylpyruvate (en-H2HPP). En-H2HPP is able to undergo a slow nonenzymatic isomerization to produce the exocyclic-delta(3),delta(5)-dihydro-hydroxyphenylpyruvate (ex-H2HPP). BacA isomerizes only the pro-R double bond in prephenate. The protein is Prephenate decarboxylase of Bacillus subtilis (strain 168).